Reading from the N-terminus, the 208-residue chain is Guanylate kinase (208 aa).

Positions 21–201 (GRVVVLSGPS…ACAELVSLLV (181 aa)) constitute a Guanylate kinase-like domain. Residue 28-35 (GPSAVGKS) participates in ATP binding.

It belongs to the guanylate kinase family.

It is found in the cytoplasm. The enzyme catalyses GMP + ATP = GDP + ADP. In terms of biological role, essential for recycling GMP and indirectly, cGMP. This Mycobacterium bovis (strain ATCC BAA-935 / AF2122/97) protein is Guanylate kinase (gmk).